Here is a 516-residue protein sequence, read N- to C-terminus: Poly(U)-binding-splicing factor PUF60-B (516 aa).

2 RRM domains span residues 86–164 (CRVY…RPGS) and 183–261 (NRIY…KAVT). A disordered region spans residues 356 to 398 (TAPASMGTPTSAVQLHTEVKREEDSRRTAEDHSAPVGNGQDSE). Residues 372–388 (TEVKREEDSRRTAEDHS) show a composition bias toward basic and acidic residues. Residues 419-506 (TVMVLRNMVG…RKVVAELYDQ (88 aa)) form the RRM 3; atypical domain.

The protein belongs to the RRM half pint family.

Its subcellular location is the nucleus. Functionally, DNA- and RNA-binding protein, involved in transcription repression and pre-mRNA splicing. In Danio rerio (Zebrafish), this protein is Poly(U)-binding-splicing factor PUF60-B (puf60b).